The chain runs to 287 residues: ATP synthase gamma chain (287 aa).

It belongs to the ATPase gamma chain family. As to quaternary structure, F-type ATPases have 2 components, CF(1) - the catalytic core - and CF(0) - the membrane proton channel. CF(1) has five subunits: alpha(3), beta(3), gamma(1), delta(1), epsilon(1). CF(0) has three main subunits: a, b and c.

Its subcellular location is the cell membrane. In terms of biological role, produces ATP from ADP in the presence of a proton gradient across the membrane. The gamma chain is believed to be important in regulating ATPase activity and the flow of protons through the CF(0) complex. This Halothermothrix orenii (strain H 168 / OCM 544 / DSM 9562) protein is ATP synthase gamma chain.